A 156-amino-acid chain; its full sequence is Transcriptional repressor NrdR (156 aa).

The segment at 3 to 34 (CPYCGHLEDRVVDSRETQDGQATRRRRACLSC) is a zinc-finger region. One can recognise an ATP-cone domain in the interval 49 to 139 (PQVVKKDGRR…VYRAFRDVGE (91 aa)).

The protein belongs to the NrdR family. Zn(2+) is required as a cofactor.

Its function is as follows. Negatively regulates transcription of bacterial ribonucleotide reductase nrd genes and operons by binding to NrdR-boxes. The chain is Transcriptional repressor NrdR from Anaeromyxobacter dehalogenans (strain 2CP-C).